The sequence spans 845 residues: Envelope glycoprotein B (845 aa).

A signal peptide spans 1-26; it reads MTPRSRLATLGTVILLVCFCAGAAHS. Topologically, residues 27–732 are virion surface; the sequence is RGDTFQTSSS…TGFINFIKHP (706 aa). Residues 29–57 are disordered; it reads DTFQTSSSPTPPGSSSKAPTKPGEEASGP. The span at 33–49 shows a compositional bias: low complexity; it reads TSSSPTPPGSSSKAPTK. 5 disulfide bridges follow: Cys68/Cys528, Cys85/Cys484, Cys157/Cys222, Cys315/Cys362, and Cys550/Cys587. An involved in fusion and/or binding to host membrane region spans residues 124–130; sequence VYRGLTE. The N-linked (GlcNAc...) asparagine; by host glycan is linked to Asn179. The interval 208-216 is involved in fusion and/or binding to host membrane; the sequence is GWFPGIYRV. N-linked (GlcNAc...) asparagine; by host glycosylation is found at Asn254, Asn275, Asn355, Asn368, Asn372, Asn385, and Asn408. A disordered region spans residues 411 to 451; sequence HAQGDSGNPTSSPPPSASPMTTSASRRKRRSASTAAAGGGG. N-linked (GlcNAc...) asparagine; by host glycosylation is found at Asn455, Asn562, Asn599, Asn614, and Asn628. The tract at residues 678-730 is hydrophobic membrane proximal region; sequence LDNTIDMNKERFVRDLSEIVADLGGIGKTVVNVASSVVTLCGSLVTGFINFIK. Residues 733-753 traverse the membrane as a helical segment; that stretch reads LGGMLMIIIVIAIILIIFMLS. Residues 754 to 845 are Intravirion-facing; that stretch reads RRTNTIAQAP…SLDISPETGE (92 aa). Residues 802–845 form a disordered region; sequence RQKADDLKKSTPSVFQRTANGLRQRLRGYKPLTQSLDISPETGE. Positions 811–822 are enriched in polar residues; sequence STPSVFQRTANG. Positions 830–833 match the Internalization motif motif; the sequence is YKPL.

This sequence belongs to the herpesviridae glycoprotein B family. In terms of assembly, homotrimer; disulfide-linked. Binds to heparan sulfate proteoglycans. Interacts with gH/gL heterodimer. Interacts with host ITGAV-ITGB3; this interaction mediates viral entry. Post-translationally, a proteolytic cleavage by host furin generates two subunits that remain linked by disulfide bonds.

It is found in the virion membrane. It localises to the host cell membrane. The protein localises to the host endosome membrane. Its subcellular location is the host Golgi apparatus membrane. In terms of biological role, envelope glycoprotein that forms spikes at the surface of the virion envelope. Participates in viral entry through an RGD motif that binds ITGAV-ITGB3. Membrane fusion is mediated by the fusion machinery composed at least of gB and the heterodimer gH/gL. May be involved in the fusion between the virion envelope and the outer nuclear membrane during virion egress. The chain is Envelope glycoprotein B from Homo sapiens (Human).